The chain runs to 489 residues: Poly(A) RNA polymerase GLD2 (489 aa).

Residues 93 to 118 (RQRFSCPSPHNQSARNSNFTSQPVTR) form a disordered region. Polar residues predominate over residues 100–116 (SPHNQSARNSNFTSQPV). Mg(2+)-binding residues include Asp219 and Asp221. The PAP-associated domain maps to 386 to 440 (SLGDLFLGFLRYYATVFKWDKQVISVRMARTLPKSNCKEWKDKFICVEEPFNRTN).

Belongs to the DNA polymerase type-B-like family. GLD2 subfamily. The cofactor is Mg(2+). Mn(2+) is required as a cofactor.

Its subcellular location is the cytoplasm. It carries out the reaction RNA(n) + ATP = RNA(n)-3'-adenine ribonucleotide + diphosphate. Cytoplasmic poly(A) RNA polymerase that adds successive AMP monomers to the 3'-end of specific RNAs, forming a poly(A) tail. In contrast to the canonical nuclear poly(A) RNA polymerase, it only adds poly(A) to selected cytoplasmic mRNAs. May not play a role in replication-dependent histone mRNA degradation. This Danio rerio (Zebrafish) protein is Poly(A) RNA polymerase GLD2.